Consider the following 644-residue polypeptide: Exoribonuclease 2 (644 aa).

In terms of domain architecture, RNB spans 189 to 516; it reads RQDLTALNFV…NHRLLKAVIK (328 aa). Positions 561–643 constitute an S1 motif domain; the sequence is DTRFAAEIID…DTRSIIARPA (83 aa).

This sequence belongs to the RNR ribonuclease family. RNase II subfamily.

It localises to the cytoplasm. It catalyses the reaction Exonucleolytic cleavage in the 3'- to 5'-direction to yield nucleoside 5'-phosphates.. Involved in mRNA degradation. Hydrolyzes single-stranded polyribonucleotides processively in the 3' to 5' direction. The sequence is that of Exoribonuclease 2 from Salmonella arizonae (strain ATCC BAA-731 / CDC346-86 / RSK2980).